A 122-amino-acid polypeptide reads, in one-letter code: Immunoglobulin lambda variable 8-61 (122 aa).

An N-terminal signal peptide occupies residues 1–24 (MSVPTMAWMMLLLGLLAYGSGVDS). The framework-1 stretch occupies residues 25-49 (QTVVTQEPSFSVSPGGTVTLTCGLS). Residues 25 to 122 (QTVVTQEPSF…YCVLYMGSGI (98 aa)) enclose the Ig-like domain. Residues Cys-46 and Cys-114 are joined by a disulfide bond. The tract at residues 50 to 58 (SGSVSTSYY) is complementarity-determining-1. The segment at 59–75 (PSWYQQTPGQAPRTLIY) is framework-2. The interval 76–78 (STN) is complementarity-determining-2. The tract at residues 79–114 (TRSSGVPDRFSGSILGNKAALTITGAQADDESDYYC) is framework-3. Residues 115 to 122 (VLYMGSGI) form a complementarity-determining-3 region.

Immunoglobulins are composed of two identical heavy chains and two identical light chains; disulfide-linked.

It localises to the secreted. Its subcellular location is the cell membrane. Its function is as follows. V region of the variable domain of immunoglobulin light chains that participates in the antigen recognition. Immunoglobulins, also known as antibodies, are membrane-bound or secreted glycoproteins produced by B lymphocytes. In the recognition phase of humoral immunity, the membrane-bound immunoglobulins serve as receptors which, upon binding of a specific antigen, trigger the clonal expansion and differentiation of B lymphocytes into immunoglobulins-secreting plasma cells. Secreted immunoglobulins mediate the effector phase of humoral immunity, which results in the elimination of bound antigens. The antigen binding site is formed by the variable domain of one heavy chain, together with that of its associated light chain. Thus, each immunoglobulin has two antigen binding sites with remarkable affinity for a particular antigen. The variable domains are assembled by a process called V-(D)-J rearrangement and can then be subjected to somatic hypermutations which, after exposure to antigen and selection, allow affinity maturation for a particular antigen. This chain is Immunoglobulin lambda variable 8-61, found in Homo sapiens (Human).